Reading from the N-terminus, the 216-residue chain is Putative germin-like protein 2-1 (216 aa).

Residues M1–A21 form the signal peptide. A disulfide bridge connects residues C31 and C46. The Cupin type-1 domain occupies S60 to D210. N67 carries N-linked (GlcNAc...) asparagine glycosylation. Residues H108, H110, E115, and H156 each coordinate Mn(2+).

This sequence belongs to the germin family. In terms of assembly, oligomer (believed to be a pentamer but probably hexamer).

Its subcellular location is the secreted. The protein resides in the extracellular space. It localises to the apoplast. Functionally, may play a role in plant defense. Probably has no oxalate oxidase activity even if the active site is conserved. The chain is Putative germin-like protein 2-1 from Oryza sativa subsp. japonica (Rice).